The following is a 201-amino-acid chain: Holliday junction branch migration complex subunit RuvA (201 aa).

The domain I stretch occupies residues 1 to 63; sequence MIASVRGEVL…EDSMTLYGFA (63 aa). The tract at residues 64–142 is domain II; that stretch reads DTEARDLFGL…LVPVQAGPPG (79 aa). The segment at 143-153 is flexible linker; it reads STPAVAATPVR. Positions 153 to 201 are domain III; sequence REQVVEALTGLGFPLKQAEQALDTVLAEQPAADTSTALRAALSLLGKNR.

Belongs to the RuvA family. As to quaternary structure, homotetramer. Forms an RuvA(8)-RuvB(12)-Holliday junction (HJ) complex. HJ DNA is sandwiched between 2 RuvA tetramers; dsDNA enters through RuvA and exits via RuvB. An RuvB hexamer assembles on each DNA strand where it exits the tetramer. Each RuvB hexamer is contacted by two RuvA subunits (via domain III) on 2 adjacent RuvB subunits; this complex drives branch migration. In the full resolvosome a probable DNA-RuvA(4)-RuvB(12)-RuvC(2) complex forms which resolves the HJ.

It is found in the cytoplasm. Its function is as follows. The RuvA-RuvB-RuvC complex processes Holliday junction (HJ) DNA during genetic recombination and DNA repair, while the RuvA-RuvB complex plays an important role in the rescue of blocked DNA replication forks via replication fork reversal (RFR). RuvA specifically binds to HJ cruciform DNA, conferring on it an open structure. The RuvB hexamer acts as an ATP-dependent pump, pulling dsDNA into and through the RuvAB complex. HJ branch migration allows RuvC to scan DNA until it finds its consensus sequence, where it cleaves and resolves the cruciform DNA. The polypeptide is Holliday junction branch migration complex subunit RuvA (Nocardia farcinica (strain IFM 10152)).